The sequence spans 483 residues: Regulatory protein ViaA (483 aa).

It belongs to the ViaA family. As to quaternary structure, homodimer. Interacts with RavA.

It is found in the cytoplasm. In terms of biological role, component of the RavA-ViaA chaperone complex, which may act on the membrane to optimize the function of some of the respiratory chains. ViaA stimulates the ATPase activity of RavA. This chain is Regulatory protein ViaA, found in Escherichia fergusonii (strain ATCC 35469 / DSM 13698 / CCUG 18766 / IAM 14443 / JCM 21226 / LMG 7866 / NBRC 102419 / NCTC 12128 / CDC 0568-73).